Here is a 104-residue protein sequence, read N- to C-terminus: L-rhamnose mutarotase (104 aa).

Tyr-18 is a binding site for substrate. The active-site Proton donor is His-22. Residues Tyr-41 and 76–77 (WW) each bind substrate.

Belongs to the rhamnose mutarotase family. Homodimer.

Its subcellular location is the cytoplasm. It carries out the reaction alpha-L-rhamnose = beta-L-rhamnose. Its pathway is carbohydrate metabolism; L-rhamnose metabolism. Functionally, involved in the anomeric conversion of L-rhamnose. In Salmonella heidelberg (strain SL476), this protein is L-rhamnose mutarotase.